Reading from the N-terminus, the 52-residue chain is Rubredoxin-2 (52 aa).

Positions 1–52 constitute a Rubredoxin-like domain; it reads MEQWKCNICGYIYNPETGDPEGDIPAGTSFESLPDSWMCPVCGAGKEEFTKI. 4 residues coordinate Fe cation: C6, C9, C39, and C42.

The protein belongs to the rubredoxin family. Monomer. Fe(3+) is required as a cofactor.

Serves as an electron acceptor for pyruvate ferredoxin oxidoreductase (PFOR). In Chlorobaculum tepidum (strain ATCC 49652 / DSM 12025 / NBRC 103806 / TLS) (Chlorobium tepidum), this protein is Rubredoxin-2 (rub2).